The sequence spans 202 residues: ER membrane protein complex subunit 7 homolog (202 aa).

Positions 1 to 23 (MAPIFRSTSLIAFSLFFFFFAST) are cleaved as a signal peptide. Residues 148–168 (IVKSPMGLMVGFMVVVVFLMP) form a helical membrane-spanning segment. The segment at 179 to 202 (MKSAQEQMRSQGVPSLTSLLPASR) is disordered. Positions 182-202 (AQEQMRSQGVPSLTSLLPASR) are enriched in polar residues.

It belongs to the EMC7 family.

The protein resides in the membrane. This chain is ER membrane protein complex subunit 7 homolog, found in Arabidopsis thaliana (Mouse-ear cress).